We begin with the raw amino-acid sequence, 262 residues long: Acyl-[acyl-carrier-protein]--UDP-N-acetylglucosamine O-acyltransferase (262 aa).

It belongs to the transferase hexapeptide repeat family. LpxA subfamily. As to quaternary structure, homotrimer.

Its subcellular location is the cytoplasm. It carries out the reaction a (3R)-hydroxyacyl-[ACP] + UDP-N-acetyl-alpha-D-glucosamine = a UDP-3-O-[(3R)-3-hydroxyacyl]-N-acetyl-alpha-D-glucosamine + holo-[ACP]. It participates in glycolipid biosynthesis; lipid IV(A) biosynthesis; lipid IV(A) from (3R)-3-hydroxytetradecanoyl-[acyl-carrier-protein] and UDP-N-acetyl-alpha-D-glucosamine: step 1/6. In terms of biological role, involved in the biosynthesis of lipid A, a phosphorylated glycolipid that anchors the lipopolysaccharide to the outer membrane of the cell. This chain is Acyl-[acyl-carrier-protein]--UDP-N-acetylglucosamine O-acyltransferase, found in Haemophilus influenzae (strain PittEE).